Reading from the N-terminus, the 327-residue chain is MSLKVFDYEDVQLIPNKCIVNSRSECDTTVILGKHAFKMPIVPANMQTIINESIAEFLAENGYFYIMHRFDGAARIPFVKKMKKRQWISSISVGVKKEECLFVEELAKQGLAPDYITIDIAHGHSNSVIEMIQRIKTHLPETFVIAGNVGTPEAVRELENAGADATKVGIGPGKVCITKIKTGFGTGGWQLAALRWCAKAARKPIIADGGIRTHGDIVKSIRFGATMVMIGSLFAGHEESSGETKIENGIAYKEYFGSASEFQKGEKKNIEGKKIWIQHKGSLKDTLVEMHQDLQSSISYAGGRDLEAIRKVDYVIVKNSIFNGDAI.

Cys176 acts as the Thioimidate intermediate in catalysis. 205–228 (IIADGGIRTHGDIVKSIRFGATMV) provides a ligand contact to NADP(+).

It belongs to the IMPDH/GMPR family. GuaC type 2 subfamily.

It catalyses the reaction IMP + NH4(+) + NADP(+) = GMP + NADPH + 2 H(+). Functionally, catalyzes the irreversible NADPH-dependent deamination of GMP to IMP. It functions in the conversion of nucleobase, nucleoside and nucleotide derivatives of G to A nucleotides, and in maintaining the intracellular balance of A and G nucleotides. In Helicobacter pylori (strain ATCC 700392 / 26695) (Campylobacter pylori), this protein is GMP reductase.